The sequence spans 195 residues: Pyridoxal 5'-phosphate synthase subunit PdxT (195 aa).

46–48 (GES) is a binding site for L-glutamine. Catalysis depends on cysteine 78, which acts as the Nucleophile. L-glutamine-binding positions include arginine 107 and 136-137 (IR). Residues histidine 173 and glutamate 175 each act as charge relay system in the active site.

Belongs to the glutaminase PdxT/SNO family. In the presence of PdxS, forms a dodecamer of heterodimers. Only shows activity in the heterodimer.

It carries out the reaction aldehydo-D-ribose 5-phosphate + D-glyceraldehyde 3-phosphate + L-glutamine = pyridoxal 5'-phosphate + L-glutamate + phosphate + 3 H2O + H(+). It catalyses the reaction L-glutamine + H2O = L-glutamate + NH4(+). Its pathway is cofactor biosynthesis; pyridoxal 5'-phosphate biosynthesis. Catalyzes the hydrolysis of glutamine to glutamate and ammonia as part of the biosynthesis of pyridoxal 5'-phosphate. The resulting ammonia molecule is channeled to the active site of PdxS. The polypeptide is Pyridoxal 5'-phosphate synthase subunit PdxT (Dehalococcoides mccartyi (strain ATCC BAA-2266 / KCTC 15142 / 195) (Dehalococcoides ethenogenes (strain 195))).